Consider the following 603-residue polypeptide: NADH-ubiquinone oxidoreductase chain 5 (603 aa).

16 consecutive transmembrane segments (helical) span residues Phe-4–Ile-24, Thr-38–Gly-58, Phe-89–Ala-109, Leu-122–Ile-142, Ala-171–Leu-191, Leu-211–Leu-233, Thr-241–Ile-261, Ile-273–Leu-293, Ile-301–Asn-320, Ala-325–Ile-347, Met-366–Leu-386, Asn-405–Thr-424, Leu-457–Leu-477, Leu-488–Ala-508, Ile-524–Met-544, and Gly-582–Ile-602.

This sequence belongs to the complex I subunit 5 family. As to quaternary structure, core subunit of respiratory chain NADH dehydrogenase (Complex I) which is composed of 45 different subunits.

It localises to the mitochondrion inner membrane. It carries out the reaction a ubiquinone + NADH + 5 H(+)(in) = a ubiquinol + NAD(+) + 4 H(+)(out). Core subunit of the mitochondrial membrane respiratory chain NADH dehydrogenase (Complex I) which catalyzes electron transfer from NADH through the respiratory chain, using ubiquinone as an electron acceptor. Essential for the catalytic activity and assembly of complex I. This Pongo abelii (Sumatran orangutan) protein is NADH-ubiquinone oxidoreductase chain 5 (MT-ND5).